We begin with the raw amino-acid sequence, 425 residues long: Threonine synthase (425 aa).

Lys105 bears the N6-(pyridoxal phosphate)lysine mark.

Belongs to the threonine synthase family. Pyridoxal 5'-phosphate serves as cofactor.

The enzyme catalyses O-phospho-L-homoserine + H2O = L-threonine + phosphate. Its pathway is amino-acid biosynthesis; L-threonine biosynthesis; L-threonine from L-aspartate: step 5/5. Functionally, catalyzes the gamma-elimination of phosphate from L-phosphohomoserine and the beta-addition of water to produce L-threonine. In Haemophilus influenzae (strain ATCC 51907 / DSM 11121 / KW20 / Rd), this protein is Threonine synthase (thrC).